The following is a 265-amino-acid chain: Hydroxyethylthiazole kinase (265 aa).

M55 contributes to the substrate binding site. 2 residues coordinate ATP: R130 and S176. G203 is a binding site for substrate.

The protein belongs to the Thz kinase family. Requires Mg(2+) as cofactor.

It catalyses the reaction 5-(2-hydroxyethyl)-4-methylthiazole + ATP = 4-methyl-5-(2-phosphooxyethyl)-thiazole + ADP + H(+). Its pathway is cofactor biosynthesis; thiamine diphosphate biosynthesis; 4-methyl-5-(2-phosphoethyl)-thiazole from 5-(2-hydroxyethyl)-4-methylthiazole: step 1/1. Its function is as follows. Catalyzes the phosphorylation of the hydroxyl group of 4-methyl-5-beta-hydroxyethylthiazole (THZ). This Leptospira interrogans serogroup Icterohaemorrhagiae serovar copenhageni (strain Fiocruz L1-130) protein is Hydroxyethylthiazole kinase.